Consider the following 559-residue polypeptide: Sporulation protein kinase mde3 (559 aa).

The 303-residue stretch at 21–323 (YLVKQKLGDG…TAKYCKEVFF (303 aa)) folds into the Protein kinase domain. ATP contacts are provided by residues 27 to 35 (LGDGSFGTV) and Lys-53. The active-site Proton acceptor is Asp-150.

The protein belongs to the protein kinase superfamily. Ser/Thr protein kinase family.

It catalyses the reaction L-seryl-[protein] + ATP = O-phospho-L-seryl-[protein] + ADP + H(+). It carries out the reaction L-threonyl-[protein] + ATP = O-phospho-L-threonyl-[protein] + ADP + H(+). Its function is as follows. Protein kinase which is essential for spore formation. The sequence is that of Sporulation protein kinase mde3 (mde3) from Schizosaccharomyces pombe (strain 972 / ATCC 24843) (Fission yeast).